Here is a 156-residue protein sequence, read N- to C-terminus: ATP synthase subunit b (156 aa).

A helical membrane pass occupies residues Met1–Val21.

The protein belongs to the ATPase B chain family. In terms of assembly, F-type ATPases have 2 components, F(1) - the catalytic core - and F(0) - the membrane proton channel. F(1) has five subunits: alpha(3), beta(3), gamma(1), delta(1), epsilon(1). F(0) has three main subunits: a(1), b(2) and c(10-14). The alpha and beta chains form an alternating ring which encloses part of the gamma chain. F(1) is attached to F(0) by a central stalk formed by the gamma and epsilon chains, while a peripheral stalk is formed by the delta and b chains.

It is found in the cell inner membrane. In terms of biological role, f(1)F(0) ATP synthase produces ATP from ADP in the presence of a proton or sodium gradient. F-type ATPases consist of two structural domains, F(1) containing the extramembraneous catalytic core and F(0) containing the membrane proton channel, linked together by a central stalk and a peripheral stalk. During catalysis, ATP synthesis in the catalytic domain of F(1) is coupled via a rotary mechanism of the central stalk subunits to proton translocation. Functionally, component of the F(0) channel, it forms part of the peripheral stalk, linking F(1) to F(0). The protein is ATP synthase subunit b of Hydrogenovibrio crunogenus (strain DSM 25203 / XCL-2) (Thiomicrospira crunogena).